The sequence spans 291 residues: Porphobilinogen deaminase (291 aa).

Cys-233 is modified (S-(dipyrrolylmethanemethyl)cysteine).

Belongs to the HMBS family. As to quaternary structure, monomer. Requires dipyrromethane as cofactor.

The enzyme catalyses 4 porphobilinogen + H2O = hydroxymethylbilane + 4 NH4(+). The protein operates within porphyrin-containing compound metabolism; protoporphyrin-IX biosynthesis; coproporphyrinogen-III from 5-aminolevulinate: step 2/4. Its function is as follows. Tetrapolymerization of the monopyrrole PBG into the hydroxymethylbilane pre-uroporphyrinogen in several discrete steps. The sequence is that of Porphobilinogen deaminase (hemC) from Ruminiclostridium josui (Clostridium josui).